Consider the following 145-residue polypeptide: Large ribosomal subunit protein bL19 (145 aa).

The protein belongs to the bacterial ribosomal protein bL19 family.

Its function is as follows. This protein is located at the 30S-50S ribosomal subunit interface and may play a role in the structure and function of the aminoacyl-tRNA binding site. This Brucella anthropi (strain ATCC 49188 / DSM 6882 / CCUG 24695 / JCM 21032 / LMG 3331 / NBRC 15819 / NCTC 12168 / Alc 37) (Ochrobactrum anthropi) protein is Large ribosomal subunit protein bL19.